A 489-amino-acid chain; its full sequence is Adenylosuccinate synthetase 2, chloroplastic (489 aa).

A chloroplast-targeting transit peptide spans 1–54 (MPLASLSLDPAPFPLIRPAAGWSGRVLPVPGPAPRLCRPLRAAPVAPATTDEPS). GTP-binding positions include 76 to 82 (GDEGKGK) and 104 to 106 (GHT). Residue D77 is the Proton acceptor of the active site. Residues D77 and G104 each coordinate Mg(2+). Residues 77 to 80 (DEGK), 102 to 105 (NAGH), T194, R208, Q288, T303, and R367 each bind IMP. H105 (proton donor) is an active-site residue. Substrate is bound at residue 363-369 (TTTGRPR). GTP contacts are provided by residues R369, 395 to 397 (KLD), and 478 to 480 (GVG).

This sequence belongs to the adenylosuccinate synthetase family. As to quaternary structure, homodimer. The cofactor is Mg(2+).

The protein localises to the plastid. It localises to the chloroplast. The catalysed reaction is IMP + L-aspartate + GTP = N(6)-(1,2-dicarboxyethyl)-AMP + GDP + phosphate + 2 H(+). It participates in purine metabolism; AMP biosynthesis via de novo pathway; AMP from IMP: step 1/2. Its function is as follows. Plays an important role in the de novo pathway and in the salvage pathway of purine nucleotide biosynthesis. Catalyzes the first committed step in the biosynthesis of AMP from IMP. This chain is Adenylosuccinate synthetase 2, chloroplastic, found in Sorghum bicolor (Sorghum).